Reading from the N-terminus, the 423-residue chain is Imidazolonepropionase (423 aa).

His78 and His80 together coordinate Fe(3+). Zn(2+) is bound by residues His78 and His80. Residues Arg87, Tyr150, and His183 each coordinate 4-imidazolone-5-propanoate. Tyr150 is a binding site for N-formimidoyl-L-glutamate. A Fe(3+)-binding site is contributed by His247. His247 serves as a coordination point for Zn(2+). Position 250 (Glu250) interacts with 4-imidazolone-5-propanoate. Position 322 (Asp322) interacts with Fe(3+). Asp322 is a Zn(2+) binding site. The N-formimidoyl-L-glutamate site is built by Asn324 and Gly326. Ser327 contacts 4-imidazolone-5-propanoate.

The protein belongs to the metallo-dependent hydrolases superfamily. HutI family. Zn(2+) serves as cofactor. It depends on Fe(3+) as a cofactor.

Its subcellular location is the cytoplasm. It carries out the reaction 4-imidazolone-5-propanoate + H2O = N-formimidoyl-L-glutamate. The protein operates within amino-acid degradation; L-histidine degradation into L-glutamate; N-formimidoyl-L-glutamate from L-histidine: step 3/3. Functionally, catalyzes the hydrolytic cleavage of the carbon-nitrogen bond in imidazolone-5-propanoate to yield N-formimidoyl-L-glutamate. It is the third step in the universal histidine degradation pathway. In Bacillus anthracis (strain A0248), this protein is Imidazolonepropionase.